The primary structure comprises 173 residues: Crossover junction endodeoxyribonuclease RuvC (173 aa).

Active-site residues include Asp8, Glu67, and Asp139. The Mg(2+) site is built by Asp8, Glu67, and Asp139.

This sequence belongs to the RuvC family. In terms of assembly, homodimer which binds Holliday junction (HJ) DNA. The HJ becomes 2-fold symmetrical on binding to RuvC with unstacked arms; it has a different conformation from HJ DNA in complex with RuvA. In the full resolvosome a probable DNA-RuvA(4)-RuvB(12)-RuvC(2) complex forms which resolves the HJ. It depends on Mg(2+) as a cofactor.

Its subcellular location is the cytoplasm. The enzyme catalyses Endonucleolytic cleavage at a junction such as a reciprocal single-stranded crossover between two homologous DNA duplexes (Holliday junction).. The RuvA-RuvB-RuvC complex processes Holliday junction (HJ) DNA during genetic recombination and DNA repair. Endonuclease that resolves HJ intermediates. Cleaves cruciform DNA by making single-stranded nicks across the HJ at symmetrical positions within the homologous arms, yielding a 5'-phosphate and a 3'-hydroxyl group; requires a central core of homology in the junction. The consensus cleavage sequence is 5'-(A/T)TT(C/G)-3'. Cleavage occurs on the 3'-side of the TT dinucleotide at the point of strand exchange. HJ branch migration catalyzed by RuvA-RuvB allows RuvC to scan DNA until it finds its consensus sequence, where it cleaves and resolves the cruciform DNA. In Enterobacter sp. (strain 638), this protein is Crossover junction endodeoxyribonuclease RuvC.